A 514-amino-acid polypeptide reads, in one-letter code: ATP synthase subunit alpha (514 aa).

Residue 169-176 participates in ATP binding; it reads GDRQTGKT.

The protein belongs to the ATPase alpha/beta chains family. F-type ATPases have 2 components, CF(1) - the catalytic core - and CF(0) - the membrane proton channel. CF(1) has five subunits: alpha(3), beta(3), gamma(1), delta(1), epsilon(1). CF(0) has three main subunits: a(1), b(2) and c(9-12). The alpha and beta chains form an alternating ring which encloses part of the gamma chain. CF(1) is attached to CF(0) by a central stalk formed by the gamma and epsilon chains, while a peripheral stalk is formed by the delta and b chains.

The protein resides in the cell membrane. The catalysed reaction is ATP + H2O + 4 H(+)(in) = ADP + phosphate + 5 H(+)(out). Its function is as follows. Produces ATP from ADP in the presence of a proton gradient across the membrane. The alpha chain is a regulatory subunit. This Buchnera aphidicola subsp. Baizongia pistaciae (strain Bp) protein is ATP synthase subunit alpha.